Consider the following 530-residue polypeptide: Cytochrome P450 78A6 (530 aa).

The helical transmembrane segment at 25–45 threads the bilayer; sequence LAFSLLAVTIIWLAISLFLWT. C474 serves as a coordination point for heme.

Belongs to the cytochrome P450 family. It depends on heme as a cofactor. As to expression, expressed in leaves, sepals, petals, stamens, carpels and developing ovules.

The protein resides in the membrane. In terms of biological role, plays a role in seed and fruit development. Functions probably in association with CYP78A9 in the regulation of seed growth. Acts maternally to promote seed growth. The sequence is that of Cytochrome P450 78A6 (CYP78A6) from Arabidopsis thaliana (Mouse-ear cress).